Reading from the N-terminus, the 1673-residue chain is AF4/FMR2 family member lilli (1673 aa).

Disordered stretches follow at residues 1-24 (MAQQ…NNNN), 54-80 (YSQN…QQGI), 125-302 (SRSA…PPEK), 407-534 (QLPP…GAQN), 575-604 (VGTG…SNKW), 722-1086 (RLSD…INTL), 1114-1133 (QGKL…PAAP), 1141-1160 (RMTP…PART), and 1187-1315 (KLTP…MGKE). Over residues 71 to 80 (REKIERQQGI) the composition is skewed to basic and acidic residues. Low complexity-rich tracts occupy residues 146–180 (SLGH…QQQQ) and 223–244 (PRTS…SGGV). The residue at position 420 (Thr420) is a Phosphothreonine. A compositionally biased stretch (basic and acidic residues) spans 428–441 (LKTEKNHSLEKQDS). Over residues 443–454 (LENDLELSESED) the composition is skewed to acidic residues. Residues Ser450 and Ser452 each carry the phosphoserine modification. A compositionally biased stretch (low complexity) spans 465–486 (GNSSNSSESDSSESGSESSSKN). Over residues 491–500 (HPNHQQHHHQ) the composition is skewed to basic residues. The segment covering 501–525 (LQQQQQQQQATMQQQQVLQQQHRSQ) has biased composition (low complexity). Over residues 577–586 (TGSGSGGTLS) the composition is skewed to gly residues. Positions 594-604 (KTPSPTESNKW) are enriched in polar residues. Residues 724-757 (SDSGTSASGSSSSSSSSSDSAMGGEVVPMPGPGE) are compositionally biased toward low complexity. Positions 775–788 (QPTQSQKAPPSNSV) are enriched in polar residues. Over residues 802–812 (QRQKKPRKKKA) the composition is skewed to basic residues. Ser821 and Ser822 each carry phosphoserine. A DNA-binding region (a.T hook) is located at residues 851–863 (KKGRGRPRKQQQS). The segment covering 860 to 898 (QQQSGGSGNLSSASAGSSSQTKGPTLTAAKKPLAKTPLA) has biased composition (low complexity). Ser871 and Ser873 each carry phosphoserine. Residues 909 to 919 (SQSSSNGNTPT) are compositionally biased toward polar residues. 2 stretches are compositionally biased toward low complexity: residues 949 to 965 (SSSA…SSSS) and 993 to 1004 (GSGSSSPSSSGS). Over residues 1011 to 1022 (TRSQVGSGQALA) the composition is skewed to polar residues. A compositionally biased stretch (low complexity) spans 1034–1060 (SQHSQHLSSSDCSSSSGGCTAVCSSSS). Positions 1065–1082 (EGRREKERERKPKSDKNK) are enriched in basic and acidic residues. A compositionally biased stretch (polar residues) spans 1190-1205 (PAQQNGHLTPKDQATN). Basic and acidic residues-rich tracts occupy residues 1226-1243 (EHPV…EAKF) and 1252-1282 (FQLK…EQPP). Phosphoserine is present on Ser1362. Position 1364 is a phosphothreonine (Thr1364). Residues 1564–1583 (NTPSSISPSNSVGSQGSGSN) show a composition bias toward low complexity. The interval 1564 to 1588 (NTPSSISPSNSVGSQGSGSNTPPGR) is disordered.

The protein belongs to the AF4 family. As to quaternary structure, component of the super elongation complex (SEC), at least composed of Ell, Cdk9, cyclin-T (CycT), lilli and ear.

Its subcellular location is the nucleus. In terms of biological role, has a role in transcriptional regulation. Acts in parallel with the Ras/MAPK and the PI3K/PKB pathways in the control of cell identity and cellular growth. Essential for regulation of the cytoskeleton and cell growth but not for cell proliferation or growth rate. Required specifically for the microtubule-based basal transport of lipid droplets. Plays a partially redundant function downstream of Raf in cell fate specification in the developing eye. Pair-rule protein that regulates embryonic cellularization, gastrulation and segmentation. The polypeptide is AF4/FMR2 family member lilli (Drosophila melanogaster (Fruit fly)).